The primary structure comprises 319 residues: Probable arabinan endo-1,5-alpha-L-arabinosidase A (319 aa).

Residues 1 to 19 (MYLQSSLALVLLRAAVVHG) form the signal peptide. Asp34 acts as the Proton acceptor in catalysis. An N-linked (GlcNAc...) asparagine glycan is attached at Asn53. Residue Glu198 is the Proton donor of the active site.

It belongs to the glycosyl hydrolase 43 family.

It localises to the secreted. It catalyses the reaction Endohydrolysis of (1-&gt;5)-alpha-arabinofuranosidic linkages in (1-&gt;5)-arabinans.. The protein operates within glycan metabolism; L-arabinan degradation. Functionally, endo-1,5-alpha-L-arabinanase involved in degradation of pectin. Its preferred substrate is linear 1,5-alpha-L-arabinan. In Aspergillus flavus (strain ATCC 200026 / FGSC A1120 / IAM 13836 / NRRL 3357 / JCM 12722 / SRRC 167), this protein is Probable arabinan endo-1,5-alpha-L-arabinosidase A (abnA).